A 142-amino-acid chain; its full sequence is Large ribosomal subunit protein uL13 (142 aa).

This sequence belongs to the universal ribosomal protein uL13 family. In terms of assembly, part of the 50S ribosomal subunit.

Functionally, this protein is one of the early assembly proteins of the 50S ribosomal subunit, although it is not seen to bind rRNA by itself. It is important during the early stages of 50S assembly. In Haemophilus influenzae (strain PittGG), this protein is Large ribosomal subunit protein uL13.